The sequence spans 124 residues: MAEITVELVSVERMLWSGQASIVTAQTTEGEIGVLPDHEPMLGQLVENGVVTIQPTDGDRLVAGVQGGFLSVSKEKVTILADFAVWAHEVDSASAEADLNSDDELAKARAEAGLRAVRRSSEGL.

This sequence belongs to the ATPase epsilon chain family. F-type ATPases have 2 components, CF(1) - the catalytic core - and CF(0) - the membrane proton channel. CF(1) has five subunits: alpha(3), beta(3), gamma(1), delta(1), epsilon(1). CF(0) has three main subunits: a, b and c.

It is found in the cell membrane. Functionally, produces ATP from ADP in the presence of a proton gradient across the membrane. In Corynebacterium efficiens (strain DSM 44549 / YS-314 / AJ 12310 / JCM 11189 / NBRC 100395), this protein is ATP synthase epsilon chain.